The primary structure comprises 198 residues: Recombination protein RecR (198 aa).

Residues 57 to 72 form a C4-type zinc finger; sequence CEKCNTFTEAQICEVC. Residues 80–175 enclose the Toprim domain; it reads TLLCVVETPA…AVTRLARGVP (96 aa).

It belongs to the RecR family.

Its function is as follows. May play a role in DNA repair. It seems to be involved in an RecBC-independent recombinational process of DNA repair. It may act with RecF and RecO. The protein is Recombination protein RecR of Paraburkholderia xenovorans (strain LB400).